The sequence spans 59 residues: MRACLKCKYLTNDEICPICHSPTSENWIGLLIVINPEKSEIAKKAGIDIKGKYALSVKE.

The Zn(2+) site is built by C4, C7, C16, and C19.

This sequence belongs to the archaeal Spt4 family. Heterodimer composed of Spt4 and Spt5.

Its function is as follows. Stimulates transcription elongation. The polypeptide is Transcription elongation factor Spt4 (Methanocaldococcus jannaschii (strain ATCC 43067 / DSM 2661 / JAL-1 / JCM 10045 / NBRC 100440) (Methanococcus jannaschii)).